The sequence spans 177 residues: MSRVAKAPVVIPAGVEVKLDGQVISIKGKNGELTRTLNNAVEVKHADNTLTFAPREGFADGWAQAGTSRALLNAMVIGVTEGFTKKLQLVGVGYRAAVKGNAVSLALGFSHPVEHALPAGITAECPTQTEIVLKGADKQLIGQVAADLRAYRRPEPYKGKGVRYADEVVRTKEAKKK.

The protein belongs to the universal ribosomal protein uL6 family. As to quaternary structure, part of the 50S ribosomal subunit.

In terms of biological role, this protein binds to the 23S rRNA, and is important in its secondary structure. It is located near the subunit interface in the base of the L7/L12 stalk, and near the tRNA binding site of the peptidyltransferase center. The sequence is that of Large ribosomal subunit protein uL6 from Erwinia tasmaniensis (strain DSM 17950 / CFBP 7177 / CIP 109463 / NCPPB 4357 / Et1/99).